Consider the following 126-residue polypeptide: Glycine cleavage system H protein (126 aa).

In terms of domain architecture, Lipoyl-binding spans 24–105; it reads TLTVGITDHA…AYGVWLFKIK (82 aa). Residue lysine 65 is modified to N6-lipoyllysine.

It belongs to the GcvH family. The glycine cleavage system is composed of four proteins: P, T, L and H. Requires (R)-lipoate as cofactor.

Its function is as follows. The glycine cleavage system catalyzes the degradation of glycine. The H protein shuttles the methylamine group of glycine from the P protein to the T protein. The polypeptide is Glycine cleavage system H protein (Burkholderia cenocepacia (strain HI2424)).